The following is a 221-amino-acid chain: Thiamine-phosphate synthase (221 aa).

4-amino-2-methyl-5-(diphosphooxymethyl)pyrimidine contacts are provided by residues 44 to 48 and Asn-79; that span reads QFREK. Residues Asp-80 and Asp-99 each contribute to the Mg(2+) site. Ser-117 serves as a coordination point for 4-amino-2-methyl-5-(diphosphooxymethyl)pyrimidine. A 2-[(2R,5Z)-2-carboxy-4-methylthiazol-5(2H)-ylidene]ethyl phosphate-binding site is contributed by 143-145; it reads TRS. Position 146 (Lys-146) interacts with 4-amino-2-methyl-5-(diphosphooxymethyl)pyrimidine. Residues Gly-175 and 195 to 196 contribute to the 2-[(2R,5Z)-2-carboxy-4-methylthiazol-5(2H)-ylidene]ethyl phosphate site; that span reads IS.

The protein belongs to the thiamine-phosphate synthase family. Mg(2+) serves as cofactor.

The catalysed reaction is 2-[(2R,5Z)-2-carboxy-4-methylthiazol-5(2H)-ylidene]ethyl phosphate + 4-amino-2-methyl-5-(diphosphooxymethyl)pyrimidine + 2 H(+) = thiamine phosphate + CO2 + diphosphate. The enzyme catalyses 2-(2-carboxy-4-methylthiazol-5-yl)ethyl phosphate + 4-amino-2-methyl-5-(diphosphooxymethyl)pyrimidine + 2 H(+) = thiamine phosphate + CO2 + diphosphate. It carries out the reaction 4-methyl-5-(2-phosphooxyethyl)-thiazole + 4-amino-2-methyl-5-(diphosphooxymethyl)pyrimidine + H(+) = thiamine phosphate + diphosphate. The protein operates within cofactor biosynthesis; thiamine diphosphate biosynthesis; thiamine phosphate from 4-amino-2-methyl-5-diphosphomethylpyrimidine and 4-methyl-5-(2-phosphoethyl)-thiazole: step 1/1. Condenses 4-methyl-5-(beta-hydroxyethyl)thiazole monophosphate (THZ-P) and 2-methyl-4-amino-5-hydroxymethyl pyrimidine pyrophosphate (HMP-PP) to form thiamine monophosphate (TMP). The sequence is that of Thiamine-phosphate synthase from Geobacillus thermodenitrificans (strain NG80-2).